The primary structure comprises 385 residues: 1-deoxy-D-xylulose 5-phosphate reductoisomerase (385 aa).

NADPH is bound by residues threonine 10, glycine 11, serine 12, isoleucine 13, glycine 36, asparagine 38, and asparagine 122. Lysine 123 is a 1-deoxy-D-xylulose 5-phosphate binding site. Glutamate 124 contacts NADPH. Aspartate 148 provides a ligand contact to Mn(2+). Residues serine 149, glutamate 150, serine 174, and histidine 197 each contribute to the 1-deoxy-D-xylulose 5-phosphate site. Glutamate 150 contacts Mn(2+). An NADPH-binding site is contributed by glycine 203. The 1-deoxy-D-xylulose 5-phosphate site is built by serine 210, asparagine 215, lysine 216, and glutamate 219. Glutamate 219 is a binding site for Mn(2+).

The protein belongs to the DXR family. Mg(2+) serves as cofactor. Mn(2+) is required as a cofactor.

The enzyme catalyses 2-C-methyl-D-erythritol 4-phosphate + NADP(+) = 1-deoxy-D-xylulose 5-phosphate + NADPH + H(+). It participates in isoprenoid biosynthesis; isopentenyl diphosphate biosynthesis via DXP pathway; isopentenyl diphosphate from 1-deoxy-D-xylulose 5-phosphate: step 1/6. Functionally, catalyzes the NADPH-dependent rearrangement and reduction of 1-deoxy-D-xylulose-5-phosphate (DXP) to 2-C-methyl-D-erythritol 4-phosphate (MEP). The chain is 1-deoxy-D-xylulose 5-phosphate reductoisomerase from Citrifermentans bemidjiense (strain ATCC BAA-1014 / DSM 16622 / JCM 12645 / Bem) (Geobacter bemidjiensis).